We begin with the raw amino-acid sequence, 424 residues long: Anaerobic glycerol-3-phosphate dehydrogenase subunit B (424 aa).

This sequence belongs to the anaerobic G-3-P dehydrogenase subunit B family. In terms of assembly, composed of a catalytic GlpA/B dimer and of membrane bound GlpC. FMN serves as cofactor.

It catalyses the reaction a quinone + sn-glycerol 3-phosphate = dihydroxyacetone phosphate + a quinol. The protein operates within polyol metabolism; glycerol degradation via glycerol kinase pathway; glycerone phosphate from sn-glycerol 3-phosphate (anaerobic route): step 1/1. Functionally, conversion of glycerol 3-phosphate to dihydroxyacetone. Uses fumarate or nitrate as electron acceptor. This Yersinia pseudotuberculosis serotype I (strain IP32953) protein is Anaerobic glycerol-3-phosphate dehydrogenase subunit B.